We begin with the raw amino-acid sequence, 181 residues long: Adenylate kinase (181 aa).

Residue 10 to 15 (GAGKGT) participates in ATP binding. Positions 30 to 59 (STGELFRRNIEEGTKLGVEAKRYLDAGDLV) are NMP. AMP contacts are provided by residues threonine 31, arginine 36, 57-59 (DLV), 85-88 (GYPR), and glutamine 92. Residues 126 to 132 (GRGRADD) are LID. Arginine 127 lines the ATP pocket. Positions 129 and 140 each coordinate AMP. Glycine 166 contacts ATP.

It belongs to the adenylate kinase family. Monomer.

The protein resides in the cytoplasm. It catalyses the reaction AMP + ATP = 2 ADP. It participates in purine metabolism; AMP biosynthesis via salvage pathway; AMP from ADP: step 1/1. Functionally, catalyzes the reversible transfer of the terminal phosphate group between ATP and AMP. Plays an important role in cellular energy homeostasis and in adenine nucleotide metabolism. The sequence is that of Adenylate kinase from Mycobacterium tuberculosis (strain ATCC 25177 / H37Ra).